The following is a 300-amino-acid chain: Acetaldehyde dehydrogenase 3 (300 aa).

11-14 (SGNI) contributes to the NAD(+) binding site. Residue Cys-126 is the Acyl-thioester intermediate of the active site. NAD(+) is bound by residues 157–165 (SAGPGTRAN) and Asn-276.

Belongs to the acetaldehyde dehydrogenase family.

It carries out the reaction acetaldehyde + NAD(+) + CoA = acetyl-CoA + NADH + H(+). This Rhodococcus jostii (strain RHA1) protein is Acetaldehyde dehydrogenase 3 (hsaG).